Here is a 470-residue protein sequence, read N- to C-terminus: Zinc finger CCCH domain-containing protein 7 (470 aa).

A disordered region spans residues 122–144 (AYSKKESEKQSGQNNTSTASRNH). Residues 131-142 (QSGQNNTSTASR) are compositionally biased toward polar residues. C3H1-type zinc fingers lie at residues 240 to 269 (AKKKKYCQFFTRFGKCNKDDGKCPYVHDPS), 273 to 294 (VCTKFLNGLCANANCKLTHKVI), 295 to 321 (PERMPDCSYYLQGLCNNEACPYRHVHV), 322 to 349 (NPIAPICDGFLKGYCSEGDECRKKHSYN), and 350 to 372 (CPVFEATGSCSQGLKCKLHHPKN). Residues 370 to 381 (PKNQSKGRKRKR) show a composition bias toward basic residues. The segment at 370 to 389 (PKNQSKGRKRKRTNEPSQKN) is disordered.

In terms of biological role, possesses RNA-binding and ribonuclease activities in vitro. In Arabidopsis thaliana (Mouse-ear cress), this protein is Zinc finger CCCH domain-containing protein 7.